Here is a 168-residue protein sequence, read N- to C-terminus: Photosystem I assembly protein Ycf3 (168 aa).

TPR repeat units lie at residues A35–P68, S72–L105, and G120–N153.

This sequence belongs to the Ycf3 family.

It localises to the plastid. It is found in the chloroplast thylakoid membrane. In terms of biological role, essential for the assembly of the photosystem I (PSI) complex. May act as a chaperone-like factor to guide the assembly of the PSI subunits. The protein is Photosystem I assembly protein Ycf3 of Piper cenocladum (Ant piper).